Consider the following 82-residue polypeptide: Delta-conotoxin-like CnVIA (82 aa).

The signal sequence occupies residues M1–A22. The propeptide occupies D23–N49. Disulfide bonds link C54–C69, C61–C73, and C68–C78.

It belongs to the conotoxin O1 superfamily. Expressed by the venom duct.

The protein localises to the secreted. Functionally, delta-conotoxins bind to site 6 of voltage-gated sodium channels (Nav) and inhibit the inactivation process. The sequence is that of Delta-conotoxin-like CnVIA from Conus consors (Singed cone).